We begin with the raw amino-acid sequence, 141 residues long: MAKKIVAVIKLALQAGKANPAPPVGPALGQHGVNIMAFCKEYNARTQDKAGFVIPVEISVFEDRSFTFITKTPPASVLITKAAGIEKGSGESAKGSVGNISKAQLEEIAKTKLPDLNCSSVESAMKVIEGTARNMGVSITD.

It belongs to the universal ribosomal protein uL11 family. In terms of assembly, part of the ribosomal stalk of the 50S ribosomal subunit. Interacts with L10 and the large rRNA to form the base of the stalk. L10 forms an elongated spine to which L12 dimers bind in a sequential fashion forming a multimeric L10(L12)X complex. Post-translationally, one or more lysine residues are methylated.

In terms of biological role, forms part of the ribosomal stalk which helps the ribosome interact with GTP-bound translation factors. This chain is Large ribosomal subunit protein uL11, found in Prochlorococcus marinus (strain MIT 9215).